Reading from the N-terminus, the 644-residue chain is Fidgetin-like protein 2 (644 aa).

2 disordered regions span residues 1–36 (MHWT…ELPP) and 285–323 (AADG…GGGG). Polar residues predominate over residues 10–27 (PLNQWPEQHLDVSSTTPS). A compositionally biased stretch (low complexity) spans 285 to 294 (AADGASYPAA). Residues A390 and 430 to 435 (GCGKAL) each bind ATP.

The protein belongs to the AAA ATPase family. The cofactor is Mg(2+).

The protein localises to the cytoplasm. It localises to the cell cortex. The enzyme catalyses ATP + H2O = ADP + phosphate + H(+). Functionally, microtubule-severing enzyme that negatively regulates cell migration and wound healing. In migrating cells, targets dynamic microtubules (MTs) at the leading edge and severs them, thereby suppressing motility. Microtubule severing releases ARHGEF2 which activates RHOA, which in turn regulates focal ahesion turnover via focal adhesion kinase, as opposed to F-actin polymerization, to suppress cell motility. Negative regulator of axon regeneration that suppresses axonal growth by selectively severing dynamic MTs in the distal axon shaft and growth cone. Contributes to proper cell branching during endothelial and neuronal development. This Mus musculus (Mouse) protein is Fidgetin-like protein 2 (Fignl2).